Reading from the N-terminus, the 293-residue chain is Shikimate kinase (293 aa).

87–97 lines the ATP pocket; sequence PLAGGLKSSSA.

The protein belongs to the GHMP kinase family. Archaeal shikimate kinase subfamily.

Its subcellular location is the cytoplasm. It carries out the reaction shikimate + ATP = 3-phosphoshikimate + ADP + H(+). It participates in metabolic intermediate biosynthesis; chorismate biosynthesis; chorismate from D-erythrose 4-phosphate and phosphoenolpyruvate: step 5/7. This Methanosarcina mazei (strain ATCC BAA-159 / DSM 3647 / Goe1 / Go1 / JCM 11833 / OCM 88) (Methanosarcina frisia) protein is Shikimate kinase.